A 208-amino-acid chain; its full sequence is Cytidylate kinase (208 aa).

Gly9–Ser17 lines the ATP pocket.

The protein belongs to the cytidylate kinase family. Type 1 subfamily.

The protein resides in the cytoplasm. It carries out the reaction CMP + ATP = CDP + ADP. The catalysed reaction is dCMP + ATP = dCDP + ADP. This chain is Cytidylate kinase, found in Thermus thermophilus (strain ATCC BAA-163 / DSM 7039 / HB27).